A 501-amino-acid chain; its full sequence is Arabinose import ATP-binding protein AraG (501 aa).

ABC transporter domains lie at 4–239 and 252–495; these read LEFN…MVGR and LGDN…LPDK. 36–43 lines the ATP pocket; the sequence is GENGAGKS.

This sequence belongs to the ABC transporter superfamily. Arabinose importer (TC 3.A.1.2.2) family. In terms of assembly, the complex is composed of two ATP-binding proteins (AraG), two transmembrane proteins (AraH) and a solute-binding protein (AraF).

The protein resides in the cell inner membrane. It catalyses the reaction L-arabinose(out) + ATP + H2O = L-arabinose(in) + ADP + phosphate + H(+). In terms of biological role, part of the ABC transporter complex AraFGH involved in arabinose import. Responsible for energy coupling to the transport system. The protein is Arabinose import ATP-binding protein AraG of Rhizobium etli (strain ATCC 51251 / DSM 11541 / JCM 21823 / NBRC 15573 / CFN 42).